The following is a 1069-amino-acid chain: Cellulose synthase A catalytic subunit 5 [UDP-forming] (1069 aa).

The residue at position 1 (Met1) is an N-acetylmethionine. Residues 1–265 (MNTGGRLIAG…KSSKINPYRM (265 aa)) lie on the Cytoplasmic side of the membrane. Residues Cys39, Cys42, Cys58, Cys61, Cys66, Cys69, Cys81, and Cys84 each contribute to the Zn(2+) site. An RING-type; degenerate zinc finger spans residues 39-85 (CQICGDEIELSVDGESFVACNECAFPVCRPCYEYERREGNQSCPQCK). Residues Ser229 and Ser230 each carry the phosphoserine modification. Residues 266–286 (LIVLRLVILGLFFHYRILHPV) traverse the membrane as a helical segment. Topologically, residues 287–288 (ND) are extracellular. Residues 289 to 309 (AYALWLISVICEIWFAVSWVL) traverse the membrane as a helical segment. At 310 to 853 (DQFPKWYPIE…INSVVYPWTS (544 aa)) the chain is on the cytoplasmic side. 4 residues coordinate UDP-alpha-D-glucose: Ser348, Lys354, Glu355, and Asp384. Asp384 is a catalytic residue. A coiled-coil region spans residues 438-464 (VRERRAMKRDYEEFKVKINALVATAQK). Lys525 is a UDP-alpha-D-glucose binding site. Mn(2+)-binding residues include Lys526 and Asp550. The active site involves Asp770. The chain crosses the membrane as a helical span at residues 854–874 (IPLLVYCSLPAICLLTGKFIV). Residues 875–879 (PEISN) are Extracellular-facing. Residues 880-900 (YASILFMALFGSIAVTGILEM) traverse the membrane as a helical segment. Residues 901–915 (QWGKVGIDDWWRNEQ) are Cytoplasmic-facing. Residues 916 to 936 (FWVIGGVSAHLFALFQGLLKV) traverse the membrane as a helical segment. Residues 937–965 (LAGVETNFTVTSKAADDGEFSELYIFKWT) are Extracellular-facing. Residue Asn943 is glycosylated (N-linked (GlcNAc...) asparagine). A helical transmembrane segment spans residues 966–986 (SLLIPPTTLLIINVIGVIVGI). The Cytoplasmic portion of the chain corresponds to 987–997 (SDAISNGYDSW). A helical membrane pass occupies residues 998–1018 (GPLFGRLFFAFWVILHLYPFL). At 1019–1027 (KGLLGKQDR) the chain is on the extracellular side. The chain crosses the membrane as a helical span at residues 1028-1048 (MPTIILVWSILLASILTLLWV). Over 1049-1069 (RVNPFVAKGGPILEICGLDCL) the chain is Cytoplasmic.

It belongs to the glycosyltransferase 2 family. Plant cellulose synthase subfamily. Zn(2+) serves as cofactor. Requires Mn(2+) as cofactor. In terms of tissue distribution, expressed in young plants, stems and flowers.

The protein localises to the cell membrane. It carries out the reaction [(1-&gt;4)-beta-D-glucosyl](n) + UDP-alpha-D-glucose = [(1-&gt;4)-beta-D-glucosyl](n+1) + UDP + H(+). The protein operates within glycan metabolism; plant cellulose biosynthesis. Catalytic subunit of cellulose synthase terminal complexes ('rosettes'), required for beta-1,4-glucan microfibril crystallization, a major mechanism of the cell wall formation. This is Cellulose synthase A catalytic subunit 5 [UDP-forming] from Arabidopsis thaliana (Mouse-ear cress).